Here is a 94-residue protein sequence, read N- to C-terminus: Co-chaperonin GroES (94 aa).

Belongs to the GroES chaperonin family. In terms of assembly, heptamer of 7 subunits arranged in a ring. Interacts with the chaperonin GroEL.

The protein localises to the cytoplasm. Functionally, together with the chaperonin GroEL, plays an essential role in assisting protein folding. The GroEL-GroES system forms a nano-cage that allows encapsulation of the non-native substrate proteins and provides a physical environment optimized to promote and accelerate protein folding. GroES binds to the apical surface of the GroEL ring, thereby capping the opening of the GroEL channel. The chain is Co-chaperonin GroES from Streptococcus pneumoniae (strain 70585).